The primary structure comprises 148 residues: 1,4-dihydroxy-2-naphthoyl-CoA hydrolase (148 aa).

Residue aspartate 15 is part of the active site.

The protein belongs to the 4-hydroxybenzoyl-CoA thioesterase family. DHNA-CoA hydrolase subfamily.

It catalyses the reaction 1,4-dihydroxy-2-naphthoyl-CoA + H2O = 1,4-dihydroxy-2-naphthoate + CoA + H(+). It functions in the pathway cofactor biosynthesis; phylloquinone biosynthesis. It participates in quinol/quinone metabolism; 1,4-dihydroxy-2-naphthoate biosynthesis; 1,4-dihydroxy-2-naphthoate from chorismate: step 7/7. In terms of biological role, catalyzes the hydrolysis of 1,4-dihydroxy-2-naphthoyl-CoA (DHNA-CoA) to 1,4-dihydroxy-2-naphthoate (DHNA), a reaction involved in phylloquinone (vitamin K1) biosynthesis. The chain is 1,4-dihydroxy-2-naphthoyl-CoA hydrolase from Nostoc sp. (strain PCC 7120 / SAG 25.82 / UTEX 2576).